The sequence spans 331 residues: MLNRKTSHFLGMRVQSELEHLSELRREAGKDRSSVHGSAARTRASVRTQWTTAAAAKADEDPGANLFPPPLPRPRICMWKYLDVHSMHQLEKTTNAEMREVLAELLELGCPEQSLRDAITLDLFCHALIFCRQQGFSLEQTSAACALLQDLHKACIATPLGNVEECYRYFTSVLFCHGVRRPPFSIDLFKEEQLLALEDYVVNTYFRHFKLYKYVFTPQVRLDLSLTYMGLQPPKLWPESETEKEESKEMEEQAVTPQKEELETVAPPEPEPSHIHVLRAYIKTQVNKELEQLQGLVEERLKASEERLSSKLTALERPFQLPPGKGKSKTK.

Phosphoserine is present on Ser-34. Disordered stretches follow at residues 236-271 and 309-331; these read LWPE…PEPE and SSKL…SKTK. A coiled-coil region spans residues 286-317; that stretch reads VNKELEQLQGLVEERLKASEERLSSKLTALER.

It localises to the cell projection. It is found in the cilium. Its subcellular location is the flagellum. The protein resides in the cytoplasmic vesicle. The protein localises to the secretory vesicle. It localises to the acrosome. It is found in the cytoplasm. This is Cilia- and flagella-associated protein 119 from Homo sapiens (Human).